Consider the following 376-residue polypeptide: MFPRPLTPLAAPKSAETLGRTPRRAPLGRARAGLGGPPLLLPSMLMFAVIVASSGLLLMIERGILSEMKPLPLHPPSHKGAAWSGTDPKPRGLSLDAGDSDLQVREDIRNRTLRAVCGQPGMPRDPWDLPVGQRRTLLRHILVSDRYRFLYCYVPKVACSNWKRVLKVLAGILNNVDVRLKMDHRSDLVFLADLRPEEIRYRLQHYFKFLFVRDPLERLLSAYRNKFGEIREYQQRYGAEIVRRYRAGAGPSPAGDDVTFPEFLRYLVDEDPEHMNEHWMPVYHLCQPCAVHYDFVGSYERLEADANQVLEWVRAPPHVRFPARQAWYRPASPESLHYHLCNVPRALLQDVLPKYILDFSLFAYPLPNVTKEACHQ.

A disordered region spans residues 1–30 (MFPRPLTPLAAPKSAETLGRTPRRAPLGRA). Topologically, residues 1–39 (MFPRPLTPLAAPKSAETLGRTPRRAPLGRARAGLGGPPL) are cytoplasmic. The segment covering 18–30 (LGRTPRRAPLGRA) has biased composition (low complexity). The helical; Signal-anchor for type II membrane protein transmembrane segment at 40–60 (LLPSMLMFAVIVASSGLLLMI) threads the bilayer. The Lumenal portion of the chain corresponds to 61-376 (ERGILSEMKP…PNVTKEACHQ (316 aa)). A disordered region spans residues 76–96 (PSHKGAAWSGTDPKPRGLSLD). Residue Asn110 is glycosylated (N-linked (GlcNAc...) asparagine). Residues 155–161 (PKVACSN) and 213–221 (RDPLERLLS) each bind 3'-phosphoadenylyl sulfate. N-linked (GlcNAc...) asparagine glycosylation occurs at Asn368.

It belongs to the sulfotransferase 2 family.

It is found in the golgi apparatus membrane. The catalysed reaction is dermatan + n 3'-phosphoadenylyl sulfate = dermatan 4'-sulfate + n adenosine 3',5'-bisphosphate + n H(+). Catalyzes the transfer of sulfate to position 4 of the N-acetylgalactosamine (GalNAc) residue of dermatan sulfate. Plays a pivotal role in the formation of 4-0-sulfated IdoA blocks in dermatan sulfate. Transfers sulfate to the C-4 hydroxyl of beta1,4-linked GalNAc that is substituted with an alpha-linked iduronic acid (IdoUA) at the C-3 hydroxyl. Transfers sulfate more efficiently to GalNAc residues in -IdoUA-GalNAc-IdoUA- than in -GlcUA-GalNAc-GlcUA-sequences. Has preference for partially desulfated dermatan sulfate. Addition of sulfate to GalNAc may occur immediately after epimerization of GlcUA to IdoUA. Appears to have an important role in the formation of the cerebellar neural network during postnatal brain development. The chain is Carbohydrate sulfotransferase 14 (Chst14) from Mus musculus (Mouse).